The sequence spans 139 residues: Nucleoside diphosphate kinase (139 aa).

Residues Lys-10, Phe-58, Arg-86, Thr-92, Arg-103, and Asn-113 each coordinate ATP. His-116 (pros-phosphohistidine intermediate) is an active-site residue.

It belongs to the NDK family. In terms of assembly, homotetramer. Mg(2+) is required as a cofactor.

It is found in the cytoplasm. It catalyses the reaction a 2'-deoxyribonucleoside 5'-diphosphate + ATP = a 2'-deoxyribonucleoside 5'-triphosphate + ADP. It carries out the reaction a ribonucleoside 5'-diphosphate + ATP = a ribonucleoside 5'-triphosphate + ADP. In terms of biological role, major role in the synthesis of nucleoside triphosphates other than ATP. The ATP gamma phosphate is transferred to the NDP beta phosphate via a ping-pong mechanism, using a phosphorylated active-site intermediate. This chain is Nucleoside diphosphate kinase, found in Nitratidesulfovibrio vulgaris (strain ATCC 29579 / DSM 644 / CCUG 34227 / NCIMB 8303 / VKM B-1760 / Hildenborough) (Desulfovibrio vulgaris).